Consider the following 350-residue polypeptide: tRNA uridine(34) hydroxylase (350 aa).

The Rhodanese domain maps to 146–240 (DDPDAVFIDM…YARRARAQGL (95 aa)). The Cysteine persulfide intermediate role is filled by Cys200. Over residues 319–328 (RRRRAGRENG) the composition is skewed to basic and acidic residues. Residues 319–350 (RRRRAGRENGNKIFNKSRGRLNSKLSIPDPAE) form a disordered region.

The protein belongs to the TrhO family.

It carries out the reaction uridine(34) in tRNA + AH2 + O2 = 5-hydroxyuridine(34) in tRNA + A + H2O. In terms of biological role, catalyzes oxygen-dependent 5-hydroxyuridine (ho5U) modification at position 34 in tRNAs. This chain is tRNA uridine(34) hydroxylase, found in Salmonella newport (strain SL254).